We begin with the raw amino-acid sequence, 576 residues long: MSDKKSLMPLVGIPGEIKNRLNILDFVKNDKFFTLYVRALQVLQARDQSDYSSFFQLGGIHGLPYTEWAKAQPQLHLYKANYCTHGTVLFPTWHRAYESTWEQTLWEAAGTVAQRFTTSDQAEWIQAAKDLRQPFWDWGYWPNDPDFIGLPDQVIRDKQVEITDYNGTKIEVENPILHYKFHPIEPTFEGDFAQWQTTMRYPDVQKQENIEGMIAGIKAAAPGFREWTFNMLTKNYTWELFSNHGAVVGAHANSLEMVHNTVHFLIGRDPTLDPLVPGHMGSVPHAAFDPIFWMHHCNVDRLLALWQTMNYDVYVSEGMNREATMGLIPGQVLTEDSPLEPFYTKNQDPWQSDDLEDWETLGFSYPDFDPVKGKSKEEKSVYINDWVHKHYGFVTTQTENPALRLLSSFQRAKSDHETQYALYDWVIHATFRYYELNNSFSIIFYFDEGEGCTLESIIGTVDAFRGTTSENCANCARSQDLIAEGFVHLNYYIGCDIGQHADHEDDAVPLYEPTRVKEYLKKRKIGCKVVSAEGELTSLVVEIKGAPYYLPVGEARPKLDHEKPIVILDDIIHRVN.

Positions 61, 85, 94, 259, 263, and 296 each coordinate Cu cation. The segment at residues 83–85 (CTH) is a cross-link (2'-(S-cysteinyl)-histidine (Cys-His)). H263 contributes to the substrate binding site. A propeptide spans 393 to 576 (FVTTQTENPA…ILDDIIHRVN (184 aa)) (removed in mature form).

This sequence belongs to the tyrosinase family. As to quaternary structure, tetramer composed of two subunits of PPO3 (H subunits) and two subunits of the as yet uncharacterized product of ORF239342 (L subunits). Cu(2+) is required as a cofactor. The C-ter is probably cleaved after Gly-392 since the mature active protein is smaller than the protein encoded by the gene.

It catalyses the reaction 2 L-dopa + O2 = 2 L-dopaquinone + 2 H2O. The catalysed reaction is L-tyrosine + O2 = L-dopaquinone + H2O. Copper-containing oxidase that catalyzes both the o-hydroxylation of monophenols and the subsequent oxidation of the resulting o-diphenols into reactive o-quinones, which evolve spontaneously to produce intermediates, which associate in dark brown pigments. Involved in the initial step of melanin synthesis. Melanins constitute a mechanism of defense and resistance to stress such as UV radiations, free radicals, gamma rays, dehydratation and extreme temperatures, and contribute to the fungal cell-wall resistance against hydrolytic enzymes in avoiding cellular lysis. Fungal pigments are also involved in the formation and stability of spores. This chain is Polyphenol oxidase 3 (PPO3), found in Agaricus bisporus (White button mushroom).